Reading from the N-terminus, the 167-residue chain is cAMP-dependent protein kinase type I-alpha regulatory subunit (167 aa).

Phosphothreonine is present on Thr12. Phosphoserine occurs at positions 14 and 20. The short motif at Arg30–Ile33 is the Pseudophosphorylation motif element. The residue at position 34 (Ser34) is a Phosphoserine. Residues Leu51–Ser78, Ile79–Arg167, Glu147, and Arg156 each bind 3',5'-cyclic AMP. The residue at position 82 (Ser82) is a Phosphoserine.

Belongs to the cAMP-dependent kinase regulatory chain family. In terms of assembly, the inactive holoenzyme is composed of two regulatory chains and two catalytic chains. Activation by cAMP releases the two active catalytic monomers and the regulatory dimer. Interacts with PRKACA and PRKACB. PRKAR1A also interacts with RFC2; the complex may be involved in cell survival. Interacts with AKAP4. Interacts with RARA; the interaction occurs in the presence of cAMP or FSH and regulates RARA transcriptional activity. Interacts with the phosphorylated form of PJA2. Interacts with CBFA2T3. Interacts with PRKX; regulates this cAMP-dependent protein kinase. Interacts with smAKAP; this interaction may target PRKAR1A to the plasma membrane. Interacts with AICDA. In terms of processing, the pseudophosphorylation site binds to the substrate-binding region of the catalytic chain, resulting in the inhibition of its activity.

It is found in the cell membrane. In terms of biological role, regulatory subunit of the cAMP-dependent protein kinases involved in cAMP signaling in cells. In Mesocricetus auratus (Golden hamster), this protein is cAMP-dependent protein kinase type I-alpha regulatory subunit.